A 352-amino-acid polypeptide reads, in one-letter code: Endoplasmic reticulum GDP-fucose transporter (352 aa).

Helical transmembrane passes span 9-29 (LGML…ELII), 34-54 (GAGN…GLVF), 70-90 (YVIL…AFNF), 96-116 (LHMI…IVLL), 126-146 (SSVA…SGDV), 163-183 (FFWW…TAYM), 201-221 (ALFF…GNIV), 249-271 (LMLF…VYVL), 276-298 (ASLT…SIIY), and 305-325 (LNHW…ANVI). Positions 350–352 (KVE) match the Prevents secretion from ER motif.

Belongs to the nucleotide-sugar transporter family. SLC35B subfamily.

It localises to the endoplasmic reticulum membrane. In terms of biological role, sugar transporter that specifically mediates the transport of UDP-N-acetylglucosamine (UDP-GlcNAc), GDP-fucose and UDP-xylose. Functions redundantly with Gfr in the O-fucosylation of Notch, positively regulating Notch signaling. Involved in the biosynthesis of heparan sulfate-glycosaminoglycan (HS-GAG) and in Dpp signaling in the wing imaginal disk. The protein is Endoplasmic reticulum GDP-fucose transporter of Drosophila melanogaster (Fruit fly).